A 335-amino-acid chain; its full sequence is Glyceraldehyde-3-phosphate dehydrogenase (335 aa).

Residues 13–14 (TI) and Gly111 each bind NAD(+). 140–142 (SCN) contacts D-glyceraldehyde 3-phosphate. Cys141 (nucleophile) is an active-site residue. Position 169 (Arg169) interacts with NAD(+). D-glyceraldehyde 3-phosphate is bound by residues Thr171 and 195 to 196 (HG). Position 300 (Gln300) interacts with NAD(+).

The protein belongs to the glyceraldehyde-3-phosphate dehydrogenase family. In terms of assembly, homotetramer.

The protein localises to the cytoplasm. The enzyme catalyses D-glyceraldehyde 3-phosphate + phosphate + NADP(+) = (2R)-3-phospho-glyceroyl phosphate + NADPH + H(+). It catalyses the reaction D-glyceraldehyde 3-phosphate + phosphate + NAD(+) = (2R)-3-phospho-glyceroyl phosphate + NADH + H(+). Its pathway is carbohydrate degradation; glycolysis; pyruvate from D-glyceraldehyde 3-phosphate: step 1/5. The sequence is that of Glyceraldehyde-3-phosphate dehydrogenase from Methanosarcina mazei (strain ATCC BAA-159 / DSM 3647 / Goe1 / Go1 / JCM 11833 / OCM 88) (Methanosarcina frisia).